Here is a 491-residue protein sequence, read N- to C-terminus: AAA-ATPase At2g46620 (491 aa).

Residues 1–21 (MGILWDSFLLLLVSTFALFLV) traverse the membrane as a helical segment. 238–245 (GPSGTGKS) is a binding site for ATP. Residues 423-460 (GTGRRLLLENGSRKSTSEDVSDDMSGSLCGGGGGSSPA) form a disordered region.

Belongs to the AAA ATPase family. BCS1 subfamily. Requires Mg(2+) as cofactor.

The protein resides in the membrane. The catalysed reaction is ATP + H2O = ADP + phosphate + H(+). This is AAA-ATPase At2g46620 from Arabidopsis thaliana (Mouse-ear cress).